Here is an 80-residue protein sequence, read N- to C-terminus: DNA-binding protein S1FA2 (80 aa).

The Nuclear localization signal signature appears at 54-59 (PPRKKK). Residues 55–70 (PRKKKPVSKKKMKREK) are compositionally biased toward basic residues. Positions 55 to 80 (PRKKKPVSKKKMKREKLKQGVSAPGE) are disordered.

This sequence belongs to the S1FA transcription factor family.

It is found in the nucleus. Functionally, DNA-binding protein that specifically recognizes a negative element (S1F) within the RPS1 promoter. The chain is DNA-binding protein S1FA2 (S1FA2) from Oryza sativa subsp. japonica (Rice).